A 561-amino-acid polypeptide reads, in one-letter code: Urocanate hydratase (561 aa).

Residues 52 to 53 (GG), Gln-130, 176 to 178 (GMG), Glu-196, Arg-201, 242 to 243 (NA), 263 to 267 (QTSAH), 273 to 274 (YL), and Tyr-322 contribute to the NAD(+) site. Cys-410 is a catalytic residue. Gly-492 lines the NAD(+) pocket.

This sequence belongs to the urocanase family. Requires NAD(+) as cofactor.

The protein localises to the cytoplasm. It carries out the reaction 4-imidazolone-5-propanoate = trans-urocanate + H2O. It functions in the pathway amino-acid degradation; L-histidine degradation into L-glutamate; N-formimidoyl-L-glutamate from L-histidine: step 2/3. Its function is as follows. Catalyzes the conversion of urocanate to 4-imidazolone-5-propionate. The chain is Urocanate hydratase from Salmonella gallinarum (strain 287/91 / NCTC 13346).